The sequence spans 502 residues: Maturase K (502 aa).

Belongs to the intron maturase 2 family. MatK subfamily.

Its subcellular location is the plastid. The protein localises to the chloroplast. In terms of biological role, usually encoded in the trnK tRNA gene intron. Probably assists in splicing its own and other chloroplast group II introns. The protein is Maturase K of Ipomoea purpurea (Common morning glory).